The chain runs to 238 residues: Orotidine 5'-phosphate decarboxylase (238 aa).

Substrate contacts are provided by residues Asp-10, Lys-32, 59–68, Thr-122, Arg-184, Gln-193, Gly-213, and Arg-214; that span reads DLKLHDIPNT. The Proton donor role is filled by Lys-61.

The protein belongs to the OMP decarboxylase family. Type 1 subfamily. In terms of assembly, homodimer.

It catalyses the reaction orotidine 5'-phosphate + H(+) = UMP + CO2. The protein operates within pyrimidine metabolism; UMP biosynthesis via de novo pathway; UMP from orotate: step 2/2. Its function is as follows. Catalyzes the decarboxylation of orotidine 5'-monophosphate (OMP) to uridine 5'-monophosphate (UMP). The protein is Orotidine 5'-phosphate decarboxylase of Bacillus cereus (strain AH820).